A 607-amino-acid chain; its full sequence is Vacuolar fusion protein MON1 homolog (607 aa).

A compositionally biased stretch (low complexity) spans 1–14 (MATSDSRSSPSSSD). Disordered regions lie at residues 1–173 (MATS…DDAS) and 463–486 (PIDR…DISV). A compositionally biased stretch (polar residues) spans 21 to 55 (NPSSDPETNSERVQSQLESMNLSQPSEVSDGSHTE).

It belongs to the MON1/SAND family. In terms of assembly, interacts with CCZ1A, CCZ1B and RABF2B. In terms of tissue distribution, widely expressed at stable levels.

Its subcellular location is the endosome. The protein resides in the prevacuolar compartment. Functionally, plays an important role in membrane trafficking through the secretory apparatus. In complex with CCZ1, acts as a guanine exchange factor (GEF) for RABG3F of the Rab7 protein family. Promotes the exchange of GDP to GTP, converting RABG3F from an inactive GDP-bound form into an active GTP-bound form. The RABG3F active form is involved in protein trafficking from prevacuolar compartments (PVCs) to vacuoles. May serve as a linker between Rab5 and Rab7 protein families in PVCs and mediate PVC maturation. The sequence is that of Vacuolar fusion protein MON1 homolog from Arabidopsis thaliana (Mouse-ear cress).